The primary structure comprises 1977 residues: Voltage-dependent L-type calcium channel subunit alpha-1F (1977 aa).

Over residues 1-11 (MSESEGGKDTT) the composition is skewed to basic and acidic residues. A disordered region spans residues 1–60 (MSESEGGKDTTPEPSPANGAGPGPEWGLCPGPPAVEGESSGASGLGTPKRRNQHSKHKTV). Over 1–92 (MSESEGGKDT…RSCISIVEWK (92 aa)) the chain is Cytoplasmic. The segment covering 48–59 (PKRRNQHSKHKT) has biased composition (basic residues). One copy of the I repeat lies at 79–375 (NPLRRSCISI…LVLGVLSGEF (297 aa)). Residues 93–111 (PFDILILLTIFANCVALGV) form a helical membrane-spanning segment. Residues 112–129 (YIPFPEDDSNTANHNLEQ) lie on the Extracellular side of the membrane. A helical membrane pass occupies residues 130–149 (VEYVFLVIFTVETVLKIVAY). Topologically, residues 150-161 (GLVLHPSAYIRN) are cytoplasmic. The chain crosses the membrane as a helical span at residues 162 to 180 (GWNLLDFIIVVVGLFSVLL). Over 181 to 201 (EQGPGRPGDAPHTGGKPGGFD) the chain is Extracellular. A helical membrane pass occupies residues 202 to 220 (VKALRAFRVLRPLRLVSGV). Topologically, residues 221-239 (PSLHIVLNSIMKALVPLLH) are cytoplasmic. Residues 240-259 (IALLVLFVIIIYAIIGLELF) traverse the membrane as a helical segment. Residues 260-347 (LGRMHKTCYF…WMQDAMGYEL (88 aa)) are Extracellular-facing. A glycan (N-linked (GlcNAc...) asparagine) is linked at Asn-295. A Ca(2+)-binding site is contributed by Glu-330. A helical transmembrane segment spans residues 348-372 (PWVYFVSLVIFGSFFVLNLVLGVLS). Topologically, residues 373-529 (GEFSKEREKA…ARCRRAVKSN (157 aa)) are cytoplasmic. The binding to the beta subunit stretch occupies residues 395-412 (QQMEEDLRGYLDWITQAE). Disordered stretches follow at residues 418-441 (DPSA…PQLA) and 455-488 (SHST…EDEE). The segment covering 455–469 (SHSTRSTHSTSSHAS) has biased composition (low complexity). An II repeat occupies 515–761 (NRVLRARCRR…VFLAIAVDNL (247 aa)). The helical transmembrane segment at 530-549 (ACYWAVLLLVFLNTLTIASE) threads the bilayer. Over 550–564 (HHGQPVWLTQIQEYA) the chain is Extracellular. A helical transmembrane segment spans residues 565–583 (NKVLLCLFTVEMLLKLYGL). Topologically, residues 584–591 (GPSAYVSS) are cytoplasmic. Residues 592–610 (FFNRFDCFVVCGGILETTL) traverse the membrane as a helical segment. The Extracellular portion of the chain corresponds to 611-620 (VEVGAMQPLG). Residues 621–639 (ISVLRCVRLLRIFKVTRHW) form a helical membrane-spanning segment. At 640–658 (ASLSNLVASLLNSMKSIAS) the chain is on the cytoplasmic side. Residues 659–679 (LLLLLFLFIIIFSLLGMQLFG) traverse the membrane as a helical segment. Residues 680–733 (GKFNFDQTHTKRSTFDTFPQALLTVFQILTGEDWNVVMYDGIMAYGGPFFPGML) are Extracellular-facing. A Ca(2+)-binding site is contributed by Glu-711. Residues 734 to 758 (VCIYFIILFICGNYILLNVFLAIAV) traverse the membrane as a helical segment. The Cytoplasmic segment spans residues 759–871 (DNLASGDAGT…KGCHTLIHHH (113 aa)). The disordered stretch occupies residues 767 to 830 (GTAKDKGGEK…EEEEEGAGGV (64 aa)). Residues 768–783 (TAKDKGGEKSNEKDLP) show a composition bias toward basic and acidic residues. Residues 807–826 (DMEEEEEEEEEEEEEEEEEG) are compositionally biased toward acidic residues. One copy of the III repeat lies at 858 to 1140 (NPLRKGCHTL…IFVGFVIITF (283 aa)). Residues 872-890 (VFTNLILVFIILSSVSLAA) form a helical membrane-spanning segment. Residues 891–906 (EDPIRAHSFRNHILGY) are Extracellular-facing. A helical transmembrane segment spans residues 907–926 (FDYAFTSIFTVEILLKMTVF). The Cytoplasmic portion of the chain corresponds to 927–938 (GAFLHRGSFCRS). A helical membrane pass occupies residues 939-957 (WFNMLDLLVVSVSLISFGI). Residues 958-963 (HSSAIS) lie on the Extracellular side of the membrane. The helical transmembrane segment at 964–983 (VVKILRVLRVLRPLRAINRA) threads the bilayer. Residues 984–1002 (KGLKHVVQCVFVAIRTIGN) are Cytoplasmic-facing. A helical transmembrane segment spans residues 1003–1022 (IMIVTTLLQFMFACIGVQLF). The Extracellular portion of the chain corresponds to 1023–1112 (KGKFYTCTDE…HGPIYNYRVE (90 aa)). The dihydropyridine binding stretch occupies residues 1060-1150 (RLWVNSDFNF…RAQGEQEYQN (91 aa)). Residue Glu-1086 coordinates Ca(2+). The helical transmembrane segment at 1113-1133 (ISVFFIVYIIIIAFFMMNIFV) threads the bilayer. Topologically, residues 1134 to 1190 (GFVIITFRAQGEQEYQNCELDKNQRQCVEYALKAQPLRRYIPKNPHQYRVWATVNSA) are cytoplasmic. The stretch at 1177–1444 (NPHQYRVWAT…LFVAVIMDNF (268 aa)) is one IV repeat. The helical transmembrane segment at 1191 to 1209 (AFEYLMFLLILLNTVALAM) threads the bilayer. At 1210–1224 (QHYEQTAPFNYAMDI) the chain is on the extracellular side. Residues 1225 to 1244 (LNMVFTGLFTIEMVLKIIAF) traverse the membrane as a helical segment. The Cytoplasmic segment spans residues 1245–1251 (KPKHYFT). Residues 1252–1273 (DAWNTFDALIVVGSIVDIAVTE) traverse the membrane as a helical segment. The Extracellular portion of the chain corresponds to 1274–1290 (VNNGGHLGESSEDSSRI). The helical transmembrane segment at 1291-1310 (SITFFRLFRVMRLVKLLSKG) threads the bilayer. Topologically, residues 1311–1329 (EGIRTLLWTFIKSFQALPY) are cytoplasmic. A helical membrane pass occupies residues 1330–1349 (VALLIAMIFFIYAVIGMQMF). Residues 1350–1416 (GKVALQDGTQ…GEEFTCGSNF (67 aa)) are Extracellular-facing. The tract at residues 1397–1463 (RCDPESDFGP…LGPHHLDEFK (67 aa)) is dihydropyridine binding. Positions 1409 to 1452 (EFTCGSNFAIAYFISFFMLCAFLIINLFVAVIMDNFDYLTRDWS) are phenylalkylamine binding. A helical transmembrane segment spans residues 1417-1441 (AIAYFISFFMLCAFLIINLFVAVIM). Residues 1442-1977 (DNFDYLTRDW…GDEMACVHAL (536 aa)) are Cytoplasmic-facing. 2 disordered regions span residues 1637 to 1754 (CDTE…EVPD) and 1816 to 1841 (DLPI…WATP). The span at 1638–1657 (DTEEEEEEGQEGVEEEDEKD) shows a compositional bias: acidic residues. Polar residues-rich tracts occupy residues 1661-1670 (NKATMVSQPS), 1702-1716 (TPTS…AGSN), 1733-1743 (GNSQPKGTKGQ), and 1829-1840 (SGPNRAQGSWAT).

It belongs to the calcium channel alpha-1 subunit (TC 1.A.1.11) family. CACNA1F subfamily. As to quaternary structure, voltage-dependent calcium channels are multisubunit complexes, consisting of alpha-1, alpha-2, beta and delta subunits in a 1:1:1:1 ratio. The channel activity is directed by the pore-forming and voltage-sensitive alpha-1 subunit. In many cases, this subunit is sufficient to generate voltage-sensitive calcium channel activity. The auxiliary subunits beta and alpha-2/delta linked by a disulfide bridge regulate the channel activity. Interacts (via IQ domain) with CABP4; in a calcium independent manner. In terms of assembly, interacts with CABP4; suppresses robust calcium-dependent inactivation of channel without enhancing the hyperpolarized voltage-dependent activation. In terms of tissue distribution, expression in skeletal muscle and retina. Isoform 4 is expressed in retina.

It is found in the membrane. It carries out the reaction Ca(2+)(in) = Ca(2+)(out). Voltage-sensitive calcium channels (VSCC) mediate the entry of calcium ions into excitable cells and are also involved in a variety of calcium-dependent processes, including muscle contraction, hormone or neurotransmitter release, gene expression, cell motility, cell division and cell death. The isoform alpha-1F gives rise to L-type calcium currents. Long-lasting (L-type) calcium channels belong to the 'high-voltage activated' (HVA) group. They are blocked by dihydropyridines (DHP), phenylalkylamines, and by benzothiazepines. Activates at more negative voltages and does not undergo calcium-dependent inactivation (CDI), due to incoming calcium ions, during depolarization. Functionally, voltage-dependent L-type calcium channel activates at more hyperpolarized voltages and exhibits a robust calcium-dependent inactivation (CDI), due to incoming calcium ions, during depolarizations. Its function is as follows. Voltage-sensitive calcium channels (VSCC) mediate the entry of calcium ions into excitable cells and are also involved in a variety of calcium-dependent processes, including muscle contraction, hormone or neurotransmitter release, gene expression, cell motility, cell division and cell death. In Homo sapiens (Human), this protein is Voltage-dependent L-type calcium channel subunit alpha-1F.